Reading from the N-terminus, the 144-residue chain is MKTYHQKPTEVQRDWYVIDASGKVLGRLATQISTLLRGKHKPTFTPSIDGGDFVIVVNAEKIVLTGRKPDQKIYYRHTGYPGGIKATPYKMMLAKHPDRILRLAVKRMLPKNRMGRRLLSKLRIYAGPNHPHAAQQPKPYIPRW.

The protein belongs to the universal ribosomal protein uL13 family. As to quaternary structure, part of the 50S ribosomal subunit.

Functionally, this protein is one of the early assembly proteins of the 50S ribosomal subunit, although it is not seen to bind rRNA by itself. It is important during the early stages of 50S assembly. The sequence is that of Large ribosomal subunit protein uL13 from Chloroflexus aurantiacus (strain ATCC 29366 / DSM 635 / J-10-fl).